The following is a 194-amino-acid chain: Ribonuclease HII (194 aa).

Positions 16–194 (CIVAGIDEAG…PYHRRSFRCC (179 aa)) constitute an RNase H type-2 domain. A divalent metal cation contacts are provided by Asp22, Glu23, and Asp113.

Belongs to the RNase HII family. The cofactor is Mn(2+). Mg(2+) is required as a cofactor.

The protein resides in the cytoplasm. It carries out the reaction Endonucleolytic cleavage to 5'-phosphomonoester.. Functionally, endonuclease that specifically degrades the RNA of RNA-DNA hybrids. The protein is Ribonuclease HII of Rickettsia massiliae (strain Mtu5).